Here is a 281-residue protein sequence, read N- to C-terminus: MSTETNNNLCIGCNKPFKSTDNIKTSNFKKYHEQCFSQDLNCSKCSGPIIASAEHKQVLGKIYHSKCFTCASCSKVLSDNDFSEISGIPCCKSCFTEIKFNPNFAISKFGSASAITQNDEKTKEKFEMKTNLYNNLQKGKDICTWCRNQIQADPDNEAVSFGGNIYHSNCFTCSKCSSSIGKNQFVTGSDGSAICKSCSDKSKQVNCFACKKPIDSTFTVVSGNKYHPNCFVCSQCKGSLEKGYIEKDGPVCGKCAATFTQPQTRTFAYSNGKGARPNGRW.

3 LIM zinc-binding domains span residues 40–101 (LNCS…IKFN), 141–205 (DICT…SKQV), and 206–262 (NCFA…FTQP).

The polypeptide is LIM domain-containing protein G (limG) (Dictyostelium discoideum (Social amoeba)).